Here is a 122-residue protein sequence, read N- to C-terminus: Large ribosomal subunit protein bL12 (122 aa).

The protein belongs to the bacterial ribosomal protein bL12 family. In terms of assembly, homodimer. Part of the ribosomal stalk of the 50S ribosomal subunit. Forms a multimeric L10(L12)X complex, where L10 forms an elongated spine to which 2 to 4 L12 dimers bind in a sequential fashion. Binds GTP-bound translation factors.

In terms of biological role, forms part of the ribosomal stalk which helps the ribosome interact with GTP-bound translation factors. Is thus essential for accurate translation. This chain is Large ribosomal subunit protein bL12, found in Shewanella putrefaciens (strain CN-32 / ATCC BAA-453).